The sequence spans 1109 residues: Protein translocase subunit SecA (1109 aa).

ATP-binding positions include glutamine 175, 193-197, and aspartate 695; that span reads GEGKT. The segment at 1038–1109 is disordered; it reads VRQAAPEQRQ…KYKNCHGRNS (72 aa). Composition is skewed to basic and acidic residues over residues 1045–1059 and 1071–1088; these read QRQD…KQDL and DTRE…KTVG. 4 residues coordinate Zn(2+): cysteine 1093, cysteine 1095, cysteine 1104, and histidine 1105. Positions 1099-1109 are enriched in basic residues; the sequence is KKYKNCHGRNS.

It belongs to the SecA family. As to quaternary structure, monomer and homodimer. Part of the essential Sec protein translocation apparatus which comprises SecA, SecYEG and auxiliary proteins SecDF. Other proteins may also be involved. Zn(2+) serves as cofactor.

It is found in the cell inner membrane. Its subcellular location is the cytoplasm. The enzyme catalyses ATP + H2O + cellular proteinSide 1 = ADP + phosphate + cellular proteinSide 2.. Functionally, part of the Sec protein translocase complex. Interacts with the SecYEG preprotein conducting channel. Has a central role in coupling the hydrolysis of ATP to the transfer of proteins into and across the cell membrane, serving as an ATP-driven molecular motor driving the stepwise translocation of polypeptide chains across the membrane. The protein is Protein translocase subunit SecA of Bacteroides fragilis (strain ATCC 25285 / DSM 2151 / CCUG 4856 / JCM 11019 / LMG 10263 / NCTC 9343 / Onslow / VPI 2553 / EN-2).